The primary structure comprises 508 residues: Histidine ammonia-lyase (508 aa).

The 5-imidazolinone (Ala-Gly) cross-link spans 141 to 143; that stretch reads ASG. Residue Ser-142 is modified to 2,3-didehydroalanine (Ser).

This sequence belongs to the PAL/histidase family. Contains an active site 4-methylidene-imidazol-5-one (MIO), which is formed autocatalytically by cyclization and dehydration of residues Ala-Ser-Gly.

The protein localises to the cytoplasm. It catalyses the reaction L-histidine = trans-urocanate + NH4(+). The protein operates within amino-acid degradation; L-histidine degradation into L-glutamate; N-formimidoyl-L-glutamate from L-histidine: step 1/3. The polypeptide is Histidine ammonia-lyase (hutH) (Bacillus subtilis (strain 168)).